Reading from the N-terminus, the 122-residue chain is S-adenosylmethionine decarboxylase proenzyme (122 aa).

Serine 69 acts as the Schiff-base intermediate with substrate; via pyruvic acid in catalysis. Serine 69 is subject to Pyruvic acid (Ser); by autocatalysis. Histidine 74 serves as the catalytic Proton acceptor; for processing activity. Residue cysteine 89 is the Proton donor; for catalytic activity of the active site.

This sequence belongs to the prokaryotic AdoMetDC family. Type 1 subfamily. In terms of assembly, heterotetramer of two alpha and two beta chains arranged as a dimer of alpha/beta heterodimers. Pyruvate is required as a cofactor. In terms of processing, is synthesized initially as an inactive proenzyme. Formation of the active enzyme involves a self-maturation process in which the active site pyruvoyl group is generated from an internal serine residue via an autocatalytic post-translational modification. Two non-identical subunits are generated from the proenzyme in this reaction, and the pyruvate is formed at the N-terminus of the alpha chain, which is derived from the carboxyl end of the proenzyme. The post-translation cleavage follows an unusual pathway, termed non-hydrolytic serinolysis, in which the side chain hydroxyl group of the serine supplies its oxygen atom to form the C-terminus of the beta chain, while the remainder of the serine residue undergoes an oxidative deamination to produce ammonia and the pyruvoyl group blocking the N-terminus of the alpha chain.

It catalyses the reaction S-adenosyl-L-methionine + H(+) = S-adenosyl 3-(methylsulfanyl)propylamine + CO2. It functions in the pathway amine and polyamine biosynthesis; S-adenosylmethioninamine biosynthesis; S-adenosylmethioninamine from S-adenosyl-L-methionine: step 1/1. Its function is as follows. Catalyzes the decarboxylation of S-adenosylmethionine to S-adenosylmethioninamine (dcAdoMet), the propylamine donor required for the synthesis of the polyamines spermine and spermidine from the diamine putrescine. The protein is S-adenosylmethionine decarboxylase proenzyme of Saccharolobus islandicus (strain L.S.2.15 / Lassen #1) (Sulfolobus islandicus).